Here is a 196-residue protein sequence, read N- to C-terminus: Putative tyrosine-protein phosphatase OCA1 (196 aa).

The Tyrosine-protein phosphatase domain maps to asparagine 33–proline 192. Catalysis depends on cysteine 130, which acts as the Phosphocysteine intermediate.

Belongs to the protein-tyrosine phosphatase family.

The protein resides in the cytoplasm. It carries out the reaction O-phospho-L-tyrosyl-[protein] + H2O = L-tyrosyl-[protein] + phosphate. In terms of biological role, putative tyrosine-protein phosphatase required for protection against superoxide stress. This chain is Putative tyrosine-protein phosphatase OCA1 (OCA1), found in Debaryomyces hansenii (strain ATCC 36239 / CBS 767 / BCRC 21394 / JCM 1990 / NBRC 0083 / IGC 2968) (Yeast).